Here is a 238-residue protein sequence, read N- to C-terminus: Accessory gene regulator A (238 aa).

The region spanning Lys-2–Glu-125 is the Response regulatory domain. Asp-59 is modified (4-aspartylphosphate). The HTH LytTR-type domain maps to Ile-143–Ile-238.

It is found in the cytoplasm. Required for high-level post-exponential phase expression of a series of secreted proteins. This Staphylococcus aureus (strain COL) protein is Accessory gene regulator A (agrA).